Here is a 323-residue protein sequence, read N- to C-terminus: Acetyl-coenzyme A carboxylase carboxyl transferase subunit alpha (323 aa).

The CoA carboxyltransferase C-terminal domain maps to 39–293 (RLSKKSQQLT…RRALGDSLRQ (255 aa)).

It belongs to the AccA family. In terms of assembly, acetyl-CoA carboxylase is a heterohexamer composed of biotin carboxyl carrier protein (AccB), biotin carboxylase (AccC) and two subunits each of ACCase subunit alpha (AccA) and ACCase subunit beta (AccD).

It localises to the cytoplasm. It catalyses the reaction N(6)-carboxybiotinyl-L-lysyl-[protein] + acetyl-CoA = N(6)-biotinyl-L-lysyl-[protein] + malonyl-CoA. It functions in the pathway lipid metabolism; malonyl-CoA biosynthesis; malonyl-CoA from acetyl-CoA: step 1/1. Component of the acetyl coenzyme A carboxylase (ACC) complex. First, biotin carboxylase catalyzes the carboxylation of biotin on its carrier protein (BCCP) and then the CO(2) group is transferred by the carboxyltransferase to acetyl-CoA to form malonyl-CoA. The protein is Acetyl-coenzyme A carboxylase carboxyl transferase subunit alpha of Burkholderia pseudomallei (strain 1106a).